The following is a 326-amino-acid chain: ATP synthase subunit gamma, mitochondrial (326 aa).

Residues 1–45 constitute a mitochondrion transit peptide; it reads MAMAALRREGRRLAAAPFTSPTPLNALRSSLVSPSEEIGLSGVRS.

The protein belongs to the ATPase gamma chain family. In terms of assembly, F-type ATPases have 2 components, CF(1) - the catalytic core - and CF(0) - the membrane proton channel. CF(1) has five subunits: alpha(3), beta(3), gamma(1), delta(1), epsilon(1). CF(0) has three main subunits: a, b and c.

The protein resides in the mitochondrion. It localises to the mitochondrion inner membrane. Functionally, mitochondrial membrane ATP synthase (F(1)F(0) ATP synthase or Complex V) produces ATP from ADP in the presence of a proton gradient across the membrane which is generated by electron transport complexes of the respiratory chain. F-type ATPases consist of two structural domains, F(1) - containing the extramembraneous catalytic core, and F(0) - containing the membrane proton channel, linked together by a central stalk and a peripheral stalk. During catalysis, ATP synthesis in the catalytic domain of F(1) is coupled via a rotary mechanism of the central stalk subunits to proton translocation. Part of the complex F(1) domain and the central stalk which is part of the complex rotary element. The gamma subunit protrudes into the catalytic domain formed of alpha(3)beta(3). Rotation of the central stalk against the surrounding alpha(3)beta(3) subunits leads to hydrolysis of ATP in three separate catalytic sites on the beta subunits. The chain is ATP synthase subunit gamma, mitochondrial (ATPC) from Ipomoea batatas (Sweet potato).